The primary structure comprises 160 residues: MSILKKPDLADPKLRAKLAKGMGHNYYGEPAWPNDLLYIFPVCILGTIACCIGLGVLEPTPLGEKADPFATPLEILPEWYFFPTFNLLRVIPNKLLGVLSMAAVPIGLITVPFIENVNKFQNPFRRPVASLVFLFGTFTAFWLGIGATMPITQALTLGFF.

3 helical membrane-spanning segments follow: residues 36–56 (LLYI…GLGV), 95–115 (LLGV…PFIE), and 131–151 (LVFL…TMPI).

This sequence belongs to the cytochrome b family. PetD subfamily. In terms of assembly, the 4 large subunits of the cytochrome b6-f complex are cytochrome b6, subunit IV (17 kDa polypeptide, petD), cytochrome f and the Rieske protein, while the 4 small subunits are petG, petL, petM and petN. The complex functions as a dimer.

It is found in the plastid. The protein localises to the chloroplast thylakoid membrane. Its function is as follows. Component of the cytochrome b6-f complex, which mediates electron transfer between photosystem II (PSII) and photosystem I (PSI), cyclic electron flow around PSI, and state transitions. This chain is Cytochrome b6-f complex subunit 4, found in Emiliania huxleyi (Coccolithophore).